The following is a 62-amino-acid chain: MKKMNWLLLLFAFAAVFSIMLIGVFIAEKSPAGIIASIVLVCAVMGGGFTLKKKMREQGLLD.

2 helical membrane-spanning segments follow: residues 7 to 27 (LLLL…VFIA) and 34 to 51 (IIAS…GFTL).

It is found in the cell membrane. This is an uncharacterized protein from Bacillus subtilis (strain 168).